We begin with the raw amino-acid sequence, 396 residues long: MDTLVMENSAPAQAASSPEFLFTSGQGTLSATDWASLITTPACEWPLLEQQIASALAAARPAGQANPLLIGCLRVRPGGSSCLYVPAAMSGDRPVPAAQAPVTAAMANQVVEANRVISVQSTPPASEFQASVSAALDAFAQGRLAKVVLSRKLTLTLHQPADPTQVMARLMAQNPHAFHFSLPLGQGRRLLGASPELLLRVSEGEVFTHPLARSARRASEPAQEQMVARDLLASRKDQHEHKLVIDEIRRVLTPHCRELAIPSSPSLMSTDTLWHLGTPIAGRLNGGEASVLSLACQLHPTPALCGYPTELARQFIREQEPFRRALFSGIVGWCDSQGNGEWAVVIRCGVLDGHQVELFAGAGIVAGSDPPWSGPRPGTKLGTMLKALGLDLEVAQ.

This sequence belongs to the isochorismate synthase family.

It carries out the reaction chorismate = isochorismate. Its pathway is siderophore biosynthesis; amonabactin biosynthesis. In terms of biological role, involved in the synthesis of amonabactin, a phenolate siderophore containing 2,3-dihydroxybenzoic acid (2,3-DHB). This chain is Putative isochorismate synthase (amoA), found in Aeromonas hydrophila.